The chain runs to 346 residues: Arsenite methyltransferase (346 aa).

This sequence belongs to the methyltransferase superfamily. Arsenite methyltransferase family.

It catalyses the reaction arsenic triglutathione + [thioredoxin]-dithiol + S-adenosyl-L-methionine + 2 H2O = methylarsonous acid + [thioredoxin]-disulfide + 3 glutathione + S-adenosyl-L-homocysteine + H(+). It carries out the reaction arsenic triglutathione + 2 [thioredoxin]-dithiol + 2 S-adenosyl-L-methionine + H2O = dimethylarsinous acid + 2 [thioredoxin]-disulfide + 3 glutathione + 2 S-adenosyl-L-homocysteine + 2 H(+). The enzyme catalyses arsenic triglutathione + 3 [thioredoxin]-dithiol + 3 S-adenosyl-L-methionine = trimethylarsine + 3 [thioredoxin]-disulfide + 3 glutathione + 3 S-adenosyl-L-homocysteine + 3 H(+). Functionally, catalyzes the transfer of a methyl group from AdoMet to arsenite, producing methylated arsenicals. Involved in the conversion of As(III) to dimethylarsenate as the main product in the medium and also produces dimethylarsine and trimethylarsine gases. Reduces the arsenic toxicity in the cell and may contribute to the global arsenic cycling. This Aquipseudomonas alcaligenes (strain ATCC 14909 / DSM 50342 / CCUG 1425 / JCM 20561 / NBRC 14159 / NCIMB 9945 / NCTC 10367 / 1577) (Pseudomonas alcaligenes) protein is Arsenite methyltransferase.